A 900-amino-acid polypeptide reads, in one-letter code: Aldos-2-ulose dehydratase (900 aa).

Positions 1-433 (MYSKVFLKPH…NPSINVFLST (433 aa)) are dehydratase domain. Tyr-35 contacts ascopyrone M. 5 residues coordinate Mg(2+): Asp-101, Thr-103, Asn-105, Phe-107, and Asp-109. Ascopyrone M contacts are provided by Tyr-116, Met-120, His-155, His-215, His-295, and His-337. The Proton acceptor role is filled by His-155. Zn(2+)-binding residues include His-215, His-295, His-337, Asp-343, Asp-345, Asp-347, Glu-349, and Glu-351. Residues Tyr-414, Tyr-419, and Ala-627 each contribute to the ascopyrone M site. The isomerase domain stretch occupies residues 434-739 (GILAERLDEE…EFPGFETFST (306 aa)). Ala-627 and His-630 together coordinate 1,5-anhydro-D-fructose. The Zn(2+) site is built by His-630, His-632, and Glu-639. Glu-639 and His-641 together coordinate ascopyrone M. His-641 contributes to the 1,5-anhydro-D-fructose binding site. His-709 provides a ligand contact to Zn(2+). Trp-726 contacts ascopyrone M. Trp-726 is a binding site for 1,5-anhydro-D-fructose.

As to quaternary structure, homodimer. Requires Zn(2+) as cofactor.

The enzyme catalyses 1,5-anhydro-D-fructose = microthecin + H2O. It catalyses the reaction 1,5-anhydro-D-fructose = ascopyrone M + H2O. It carries out the reaction ascopyrone M = microthecin. The catalysed reaction is 2-dehydro-D-glucose = cortalcerone + H2O. The protein operates within carbohydrate metabolism; 1,5-anhydro-D-fructose degradation. Its function is as follows. A bifunctional enzyme which catalyzes the dehydration of anhydrofructose into ascopyrone M, and the isomerization of ascopyrone M into microthecin. To a lesser extent, can also act on 2-dehydro-D-glucopyranose (D-glucosone), leading to the antibiotic cortalcerone. The chain is Aldos-2-ulose dehydratase from Phanerodontia chrysosporium (White-rot fungus).